The following is a 302-amino-acid chain: Riboflavin transporter (302 aa).

The next 8 membrane-spanning stretches (helical) occupy residues 16–36 (AVVG…LNVV), 44–64 (LAFP…LFSL), 87–107 (VVLA…VPIW), 109–129 (AIAL…LFLG), 158–178 (IGWA…SSLI), 191–213 (ITVW…AGFA), 227–247 (GLLT…ADAA), and 264–284 (GWLF…ALIL). 2 EamA domains span residues 30-151 (FSLL…MIIL) and 170-291 (LLWG…LFIM).

This sequence belongs to the drug/metabolite transporter (DMT) superfamily. 10 TMS drug/metabolite exporter (DME) (TC 2.A.7.3) family.

The protein resides in the cell membrane. In terms of biological role, transports riboflavin into the cell. Can also transport FMN and FAD. Required for normal nodule development during colonization of pea plant roots. This Rhizobium johnstonii (strain DSM 114642 / LMG 32736 / 3841) (Rhizobium leguminosarum bv. viciae) protein is Riboflavin transporter.